Here is an 845-residue protein sequence, read N- to C-terminus: Molybdenum cofactor sulfurase (845 aa).

Residue K240 is modified to N6-(pyridoxal phosphate)lysine. C404 is a catalytic residue. Positions 666 to 840 (SFPQDSSPSS…LMVGDTVTPS (175 aa)) constitute an MOSC domain.

The protein belongs to the class-V pyridoxal-phosphate-dependent aminotransferase family. MOCOS subfamily. The cofactor is pyridoxal 5'-phosphate.

It carries out the reaction Mo-molybdopterin + L-cysteine + AH2 = thio-Mo-molybdopterin + L-alanine + A + H2O. Its pathway is cofactor biosynthesis; molybdopterin biosynthesis. Functionally, sulfurates the molybdenum cofactor. Sulfation of molybdenum is essential for xanthine dehydrogenase (XDH) and aldehyde oxidase (ADO) enzymes in which molybdenum cofactor is liganded by 1 oxygen and 1 sulfur atom in active form. This is Molybdenum cofactor sulfurase from Aspergillus clavatus (strain ATCC 1007 / CBS 513.65 / DSM 816 / NCTC 3887 / NRRL 1 / QM 1276 / 107).